The primary structure comprises 268 residues: Ribosomal RNA small subunit methyltransferase A (268 aa).

S-adenosyl-L-methionine contacts are provided by Asn18, Leu20, Gly45, Glu66, Asp91, and Asn112.

This sequence belongs to the class I-like SAM-binding methyltransferase superfamily. rRNA adenine N(6)-methyltransferase family. RsmA subfamily.

The protein resides in the cytoplasm. It carries out the reaction adenosine(1518)/adenosine(1519) in 16S rRNA + 4 S-adenosyl-L-methionine = N(6)-dimethyladenosine(1518)/N(6)-dimethyladenosine(1519) in 16S rRNA + 4 S-adenosyl-L-homocysteine + 4 H(+). Specifically dimethylates two adjacent adenosines (A1518 and A1519) in the loop of a conserved hairpin near the 3'-end of 16S rRNA in the 30S particle. May play a critical role in biogenesis of 30S subunits. The protein is Ribosomal RNA small subunit methyltransferase A of Pseudoalteromonas translucida (strain TAC 125).